The primary structure comprises 232 residues: Small ribosomal subunit protein uS3 (232 aa).

Residues 39–107 (VRQYLTKELK…PAQINIAEVR (69 aa)) form the KH type-2 domain.

The protein belongs to the universal ribosomal protein uS3 family. Part of the 30S ribosomal subunit. Forms a tight complex with proteins S10 and S14.

Functionally, binds the lower part of the 30S subunit head. Binds mRNA in the 70S ribosome, positioning it for translation. This is Small ribosomal subunit protein uS3 from Aliivibrio salmonicida (strain LFI1238) (Vibrio salmonicida (strain LFI1238)).